Reading from the N-terminus, the 299-residue chain is Oxygen-dependent coproporphyrinogen-III oxidase (299 aa).

S92 serves as a coordination point for substrate. A divalent metal cation-binding residues include H96 and H106. Residue H106 is the Proton donor of the active site. 108–110 (NVR) is a binding site for substrate. A divalent metal cation is bound by residues H145 and H175. The segment at 240–275 (YVEFNLVWDRGTLFGLQTGGRTESILMSMPPLVRWE) is important for dimerization. 258–260 (GGR) contributes to the substrate binding site.

This sequence belongs to the aerobic coproporphyrinogen-III oxidase family. As to quaternary structure, homodimer. It depends on a divalent metal cation as a cofactor.

The protein localises to the cytoplasm. The enzyme catalyses coproporphyrinogen III + O2 + 2 H(+) = protoporphyrinogen IX + 2 CO2 + 2 H2O. It functions in the pathway porphyrin-containing compound metabolism; protoporphyrin-IX biosynthesis; protoporphyrinogen-IX from coproporphyrinogen-III (O2 route): step 1/1. In terms of biological role, involved in the heme biosynthesis. Catalyzes the aerobic oxidative decarboxylation of propionate groups of rings A and B of coproporphyrinogen-III to yield the vinyl groups in protoporphyrinogen-IX. The polypeptide is Oxygen-dependent coproporphyrinogen-III oxidase (Salmonella dublin (strain CT_02021853)).